The chain runs to 218 residues: ATP phosphoribosyltransferase (218 aa).

Belongs to the ATP phosphoribosyltransferase family. Short subfamily. As to quaternary structure, heteromultimer composed of HisG and HisZ subunits.

Its subcellular location is the cytoplasm. The catalysed reaction is 1-(5-phospho-beta-D-ribosyl)-ATP + diphosphate = 5-phospho-alpha-D-ribose 1-diphosphate + ATP. It participates in amino-acid biosynthesis; L-histidine biosynthesis; L-histidine from 5-phospho-alpha-D-ribose 1-diphosphate: step 1/9. In terms of biological role, catalyzes the condensation of ATP and 5-phosphoribose 1-diphosphate to form N'-(5'-phosphoribosyl)-ATP (PR-ATP). Has a crucial role in the pathway because the rate of histidine biosynthesis seems to be controlled primarily by regulation of HisG enzymatic activity. In Lactiplantibacillus plantarum (strain ATCC BAA-793 / NCIMB 8826 / WCFS1) (Lactobacillus plantarum), this protein is ATP phosphoribosyltransferase.